Consider the following 374-residue polypeptide: PqqA peptide cyclase (374 aa).

The Radical SAM core domain maps to 4–224 (IEPPMGLLAE…ERLKGVMVID (221 aa)). 3 residues coordinate [4Fe-4S] cluster: C18, C22, and C25.

The protein belongs to the radical SAM superfamily. PqqE family. Interacts with PqqD. The interaction is necessary for activity of PqqE. [4Fe-4S] cluster serves as cofactor.

It carries out the reaction [PQQ precursor protein] + S-adenosyl-L-methionine = E-Y cross-linked-[PQQ precursor protein] + 5'-deoxyadenosine + L-methionine + H(+). Its pathway is cofactor biosynthesis; pyrroloquinoline quinone biosynthesis. Catalyzes the cross-linking of a glutamate residue and a tyrosine residue in the PqqA protein as part of the biosynthesis of pyrroloquinoline quinone (PQQ). In Granulibacter bethesdensis (strain ATCC BAA-1260 / CGDNIH1), this protein is PqqA peptide cyclase.